Here is a 110-residue protein sequence, read N- to C-terminus: Nucleoid-associated protein NFA_2940 (110 aa).

It belongs to the YbaB/EbfC family. Homodimer.

The protein resides in the cytoplasm. The protein localises to the nucleoid. Its function is as follows. Binds to DNA and alters its conformation. May be involved in regulation of gene expression, nucleoid organization and DNA protection. This Nocardia farcinica (strain IFM 10152) protein is Nucleoid-associated protein NFA_2940.